The sequence spans 253 residues: 4-phosphopantoate--beta-alanine ligase (253 aa).

Residues arginine 17, arginine 39, 179–181, 185–186, and 197–198 each bind ATP; these read DLN, RT, and NL.

It belongs to the archaeal phosphopantothenate synthetase family. In terms of assembly, homodimer.

The catalysed reaction is (R)-4-phosphopantoate + beta-alanine + ATP = (R)-4'-phosphopantothenate + AMP + diphosphate + H(+). It functions in the pathway cofactor biosynthesis; coenzyme A biosynthesis. In terms of biological role, catalyzes the condensation of (R)-4-phosphopantoate and beta-alanine to 4'-phosphopantothenate in the CoA biosynthesis pathway. This is 4-phosphopantoate--beta-alanine ligase from Methanosarcina mazei (strain ATCC BAA-159 / DSM 3647 / Goe1 / Go1 / JCM 11833 / OCM 88) (Methanosarcina frisia).